Here is a 251-residue protein sequence, read N- to C-terminus: MDLIGLPTLQDNYIWLLINPQHQCLIVDPGVAAPVLHYLTENRITPKAILLTHHHNDHVGGVAEIVQAYPEMPVYGPAETQGQGCTQVVADNDTLSLLGCQISIMALPGHTLGHMAYYSAPYLFCGDTLFSAGCGRLFEGSAQQMFDSLQRIIQLPDNTLVCCAHEYTESNLRFARHVLPKNREIETYQQHVTILRAKQQPTVPSTLRIEMEINPFLRCYDYDLQRNVGFPTQPNEIWRVFACLRNMKDSF.

Zn(2+) is bound by residues His53, His55, Asp57, His58, His110, Asp127, and His165.

This sequence belongs to the metallo-beta-lactamase superfamily. Glyoxalase II family. As to quaternary structure, monomer. The cofactor is Zn(2+).

It carries out the reaction an S-(2-hydroxyacyl)glutathione + H2O = a 2-hydroxy carboxylate + glutathione + H(+). Its pathway is secondary metabolite metabolism; methylglyoxal degradation; (R)-lactate from methylglyoxal: step 2/2. Thiolesterase that catalyzes the hydrolysis of S-D-lactoyl-glutathione to form glutathione and D-lactic acid. The polypeptide is Hydroxyacylglutathione hydrolase (Edwardsiella ictaluri (strain 93-146)).